Here is a 409-residue protein sequence, read N- to C-terminus: Glycosaminoglycan xylosylkinase (409 aa).

Over 1–6 (MKLKQR) the chain is Cytoplasmic. Residues 7–25 (VVLLAILLVIFIFTKVFLI) traverse the membrane as a helical; Signal-anchor for type II membrane protein segment. Residues 26–409 (DNLDTSAANR…VEDRMPLSHL (384 aa)) are Lumenal-facing. Residues Q107 and K123 each contribute to the ATP site. Mn(2+) is bound at residue D142. Residue N193 is glycosylated (N-linked (GlcNAc...) asparagine). 2 disulfides stabilise this stretch: C196/C211 and C201/C204. 222 to 225 (TLWL) lines the ATP pocket. Cystine bridges form between C257–C331 and C332–C389. The active site involves D289. Positions 294 and 309 each coordinate ATP. Mn(2+) is bound at residue D309.

Belongs to the FAM20 family. It depends on Mn(2+) as a cofactor. As to expression, widely expressed. Strongly expressed in pancreas, spleen and fetal liver.

It is found in the golgi apparatus membrane. It carries out the reaction 3-O-(beta-D-galactosyl-(1-&gt;3)-beta-D-galactosyl-(1-&gt;4)-beta-D-xylosyl)-L-seryl-[protein] + ATP = 3-O-(beta-D-galactosyl-(1-&gt;3)-beta-D-galactosyl-(1-&gt;4)-beta-D-2-O-phosphoxylosyl)-L-seryl-[protein] + ADP + H(+). Functionally, responsible for the 2-O-phosphorylation of xylose in the glycosaminoglycan-protein linkage region of proteoglycans thereby regulating the amount of mature GAG chains. Sulfated glycosaminoglycans (GAGs), including heparan sulfate and chondroitin sulfate, are synthesized on the so-called common GAG-protein linkage region (GlcUAbeta1-3Galbeta1-3Galbeta1-4Xylbeta1-O-Ser) of core proteins, which is formed by the stepwise addition of monosaccharide residues by the respective specific glycosyltransferases. Xylose 2-O-phosphorylation may influence the catalytic activity of B3GAT3 (GlcAT-I) which completes the precursor tetrasaccharide of GAG-protein linkage regions on which the repeating disaccharide region is synthesized. The protein is Glycosaminoglycan xylosylkinase of Homo sapiens (Human).